A 509-amino-acid polypeptide reads, in one-letter code: Kynureninase 1 (509 aa).

Pyridoxal 5'-phosphate is bound by residues Leu-154, Thr-155, 183 to 186 (FPSD), Asp-270, His-273, and Tyr-295. At Lys-296 the chain carries N6-(pyridoxal phosphate)lysine. Residues Trp-345 and Asn-373 each coordinate pyridoxal 5'-phosphate.

Belongs to the kynureninase family. In terms of assembly, homodimer. Requires pyridoxal 5'-phosphate as cofactor.

Its subcellular location is the cytoplasm. The enzyme catalyses L-kynurenine + H2O = anthranilate + L-alanine + H(+). It carries out the reaction 3-hydroxy-L-kynurenine + H2O = 3-hydroxyanthranilate + L-alanine + H(+). The protein operates within amino-acid degradation; L-kynurenine degradation; L-alanine and anthranilate from L-kynurenine: step 1/1. Its pathway is cofactor biosynthesis; NAD(+) biosynthesis; quinolinate from L-kynurenine: step 2/3. In terms of biological role, catalyzes the cleavage of L-kynurenine (L-Kyn) and L-3-hydroxykynurenine (L-3OHKyn) into anthranilic acid (AA) and 3-hydroxyanthranilic acid (3-OHAA), respectively. This Chaetomium globosum (strain ATCC 6205 / CBS 148.51 / DSM 1962 / NBRC 6347 / NRRL 1970) (Soil fungus) protein is Kynureninase 1.